Here is a 417-residue protein sequence, read N- to C-terminus: Echinulin prenyltransferase 1 (417 aa).

8 residues coordinate dimethylallyl diphosphate: Arg90, Lys179, Tyr181, Lys248, Tyr250, Tyr333, Tyr398, and Tyr402.

Belongs to the tryptophan dimethylallyltransferase family.

It catalyses the reaction cyclo(L-tryptophyl-L-alanyl) + dimethylallyl diphosphate = preechinulin + diphosphate. Its pathway is secondary metabolite biosynthesis. The protein operates within alkaloid biosynthesis. Functionally, prenyltransferase; part of the gene cluster that mediates the biosynthesis of echinulin family alkaloid. The pathway begins with the biosynthesis of the cyclic dipeptide cyclo-L-Trp-L-Ala (cyclo-TA) by the NRPS echPS via condensation of L-alanine and L-tryptophan. The prenyltransferase echPT1 then catalyzes the first prenylation step, a reverse prenylation reaction at C2, to yield preechinulin. Preechinulin is the substrate of the cytochrome P450 monooxygenase echP450 that catalyzes the formation of the double bond between C10 and C11 to produce neoechulin A. The unique prenyltransferase echPT2 functions as a competitive enzyme with echP450 for preechinulin metabolization and uses preechinulin for effective regiospecific prenylations. Preechinulin is prenylated by echPT2 at C5 or C7. C7-prenylation leads to accumulation of tardioxopiperazine B without further modification by echPT2. In contrast, the C5-prenylated tardioxopiperazine A can be prenylated again by echPT2, predominantly at C7 to form echinulin or less frequently at C4 to give variecolorin L. EchPT2 also accepts neoechilunin A to produce varlecolorin G (prenylation at C5) or isoechinulin A (prenylation at C7). EchPT2 further converts isoechinulin A into dehydroechinulin. Moreover, a yet unidentified enzyme can also convert neoechilunin A into neoechilunin B by introducing a double bond between positions C14 and C17 and thus provides a further substrate to echPT2 for C5 and C7 prenylation. In Aspergillus ruber (Eurotium rubrum), this protein is Echinulin prenyltransferase 1.